Consider the following 194-residue polypeptide: uncharacterized protein (194 aa).

CBS domains are found at residues 13–72 and 78–133; these read MSFP…PKDV and MSKK…LLEI. Positions 159 to 192 constitute an ACP-type MB domain; it reads YINGICENCGYQGRVRLYQGRYLCDECIEEFEEK. Residues C164, C167, C182, and C185 each coordinate Fe cation. C164, C167, C182, and C185 together coordinate Zn(2+).

This is an uncharacterized protein from Methanocaldococcus jannaschii (strain ATCC 43067 / DSM 2661 / JAL-1 / JCM 10045 / NBRC 100440) (Methanococcus jannaschii).